Consider the following 598-residue polypeptide: MDLSRSQTNFQLGFGCSHASMTPTPTPRAPIADDSINLQVDQSFRSLPTTFSPIPLQLLEQKAEKTTTVDEPKKDGGGGGDQKEDEHFRILGHHMCLKRQRDCPLLLTQSKHPKRSSIGDSDLESRRAAVRAWGDQPIHLADPDIHELMEKEKQRQVRGIELIASENFVCRAVMEALGSHLTNKYSEGMPGARYYTGNQYIDQIENLCIERALTAFGLESDKWGVNVQPYSCTSANFAVYTGLLLPGERIMGLDSPSGGHMSHGYCTPGGKKISAASIFFESFPYKVNPQTGYIDYDKLEDKALDYRPKILICGGSSYPRDWDFARVRQIADKCGAVLMCDMAHISGLVATKECSNPFDHCDIVTSTTHKGLRGPRGGIIFYRRGPKIRKQGHHSSHCDTSTHYDLEEKINFAVFPSLQGGPHNNHIAALAIALKQVATPEYKAYIQQMKKNAQALAAALLRRKCRLVTGGTDNHLLLWDLTPMGLTGKVYEKVCEMCHITLNKTAIFGDNGTISPGGVRIGTPAMTTRGCIESDFETMADFLIKAAQITSALQREHGKSHKEFVKSLCTNKDIAELRNRVEAFALQYEMPASLIRIE.

The segment at 57 to 85 (QLLEQKAEKTTTVDEPKKDGGGGGDQKED) is disordered. Positions 61–85 (QKAEKTTTVDEPKKDGGGGGDQKED) are enriched in basic and acidic residues. Lys370 bears the N6-(pyridoxal phosphate)lysine mark.

This sequence belongs to the SHMT family. In terms of assembly, homotetramer. Pyridoxal 5'-phosphate serves as cofactor.

The protein localises to the cytoplasm. It catalyses the reaction (6R)-5,10-methylene-5,6,7,8-tetrahydrofolate + glycine + H2O = (6S)-5,6,7,8-tetrahydrofolate + L-serine. Its pathway is one-carbon metabolism; tetrahydrofolate interconversion. Its function is as follows. Catalyzes the interconversion of serine and glycine. The chain is Serine hydroxymethyltransferase 7 (SHM7) from Arabidopsis thaliana (Mouse-ear cress).